The sequence spans 427 residues: Vitamin D3 receptor (427 aa).

A DNA-binding region (nuclear receptor) is located at residues 21-96; sequence PRICGVCGDR…IGMMKEFILT (76 aa). Cys-24, Cys-27, Cys-41, Cys-44, Cys-60, Cys-66, Cys-76, and Cys-79 together coordinate Zn(2+). NR C4-type zinc fingers lie at residues 24 to 44 and 60 to 79; these read CGVCGDRATGFHFNAMTCEGC and CPFNGDCRITKDNRRHCQAC. A hinge region spans residues 97-126; the sequence is DEEVQRKREMILKRKEEEALKDSLRPKLSE. One can recognise an NR LBD domain in the interval 127–423; it reads EQQRIIAILL…LTPLVLEVFG (297 aa). Residue Tyr-143 coordinates calcitriol. Positions 149–201 are disordered; sequence DFGQFRPPVRGDEEEGTLPSRSSSAHAPSFSGSSSSSCSDQYTSSPDTMEPAS. Low complexity predominate over residues 168 to 193; the sequence is SRSSSAHAPSFSGSSSSSCSDQYTSS. Ser-237 provides a ligand contact to calcitriol. The interval 246-264 is interaction with coactivator LXXLL motif; it reads KMIPGFRDLTAEDQIVLLK. Calcitriol is bound by residues Arg-274, Ser-278, His-305, and His-397. The short motif at 416-424 is the 9aaTAD element; sequence PLVLEVFGN.

The protein belongs to the nuclear hormone receptor family. NR1 subfamily. Homodimer in the absence of bound vitamin D3. Heterodimer with RXRA after vitamin D3 binding. Interacts with MED1, NCOA1, NCOA2, NCOA3 and NCOA6 coactivators, leading to a strong increase of transcription of target genes. Interacts with the corepressor NCOR1. Interacts with SNW1. Interacts with IRX4, the interaction does not affect its transactivation activity. Interacts with CRY1. Interacts with CRY2 in a ligand-dependent manner. Ubiquitinated by UBR5, leading to its degradation: UBR5 specifically recognizes and binds ligand-bound VDR when it is not associated with coactivators (NCOAs). In presence of NCOAs, the UBR5-degron is not accessible, preventing its ubiquitination and degradation.

The protein localises to the nucleus. Its subcellular location is the cytoplasm. In terms of biological role, nuclear receptor for calcitriol, the active form of vitamin D3 which mediates the action of this vitamin on cells. Enters the nucleus upon vitamin D3 binding where it forms heterodimers with the retinoid X receptor/RXR. The VDR-RXR heterodimers bind to specific response elements on DNA and activate the transcription of vitamin D3-responsive target genes. Plays a central role in calcium homeostasis. Also functions as a receptor for the secondary bile acid lithocholic acid (LCA) and its metabolites. The polypeptide is Vitamin D3 receptor (VDR) (Sus scrofa (Pig)).